The primary structure comprises 850 residues: Pierisin (850 aa).

Ricin B-type lectin domains follow at residues 267 to 409, 413 to 560, and 564 to 707; these read GEFM…WNII, FRPI…WDIK, and YQYV…WYLK.

It belongs to the pierisin ADP-ribosyltransferase family.

It carries out the reaction a 2'-deoxyguanosine in DNA + NAD(+) = an N(2)-(ADP-L-ribosyl)-2'-deoxyguanosine in DNA + nicotinamide + H(+). ADP-ribosylates double-stranded DNA by targeting the N2 amino group of dG residues. Induces apoptosis in a range of human cell lines. May play a role in destroying cells during pupation and/or defense against parasites. This is Pierisin from Pieris brassicae (White butterfly).